A 70-amino-acid chain; its full sequence is DNA gyrase inhibitor YacG (70 aa).

Zn(2+) contacts are provided by Cys-21, Cys-24, Cys-36, and Cys-40.

It belongs to the DNA gyrase inhibitor YacG family. As to quaternary structure, interacts with GyrB. The cofactor is Zn(2+).

In terms of biological role, inhibits all the catalytic activities of DNA gyrase by preventing its interaction with DNA. Acts by binding directly to the C-terminal domain of GyrB, which probably disrupts DNA binding by the gyrase. The polypeptide is DNA gyrase inhibitor YacG (Sinorhizobium medicae (strain WSM419) (Ensifer medicae)).